The sequence spans 142 residues: HTH-type transcriptional regulator MntR (142 aa).

Residues 1–63 enclose the HTH dtxR-type domain; the sequence is MPTPSMEDYI…YEKYRGLVLT (63 aa). Mn(2+) is bound by residues D8, E11, H77, E99, E102, and H103.

The protein belongs to the DtxR/MntR family. As to quaternary structure, homodimer.

The protein localises to the cytoplasm. Its activity is regulated as follows. DNA binding is strongly activated by Mn(2+). Functionally, central regulator of manganese homeostasis. This is HTH-type transcriptional regulator MntR from Bacillus mycoides (strain KBAB4) (Bacillus weihenstephanensis).